A 318-amino-acid polypeptide reads, in one-letter code: Retinol dehydrogenase 11 (318 aa).

Residues 1 to 21 (MVELMFPLLLLLLPFLLYMAA) traverse the membrane as a helical; Signal-anchor for type II membrane protein segment. Residues 22–318 (PQIRKMLSSG…SCDLLGLPID (297 aa)) are Cytoplasmic-facing. An NADP(+)-binding site is contributed by 48–54 (GANTGIG). K112 is modified (N6-acetyllysine). S177 provides a ligand contact to substrate. The active-site Proton acceptor is Y202.

This sequence belongs to the short-chain dehydrogenases/reductases (SDR) family. In terms of assembly, interacts with SELENOF. In terms of processing, not glycosylated. As to expression, predominantly expressed in the epithelial cells of prostate, in both basal and luminal secretory cell populations. Expressed at low levels in spleen, thymus, testis, ovary, small intestine, colon, peripherical blood leukocytes, kidney, adrenal gland and fetal liver. Not detected in prostatic fibromuscular stromal cells, endothelial cells, or infiltrating lymphocytes.

It is found in the endoplasmic reticulum membrane. The catalysed reaction is all-trans-retinol + NADP(+) = all-trans-retinal + NADPH + H(+). It carries out the reaction 11-cis-retinol + NADP(+) = 11-cis-retinal + NADPH + H(+). The enzyme catalyses 9-cis-retinol + NADP(+) = 9-cis-retinal + NADPH + H(+). It catalyses the reaction 13-cis-retinol + NADP(+) = 13-cis-retinal + NADPH + H(+). It participates in cofactor metabolism; retinol metabolism. With respect to regulation, SELENOF decreases the retinol dehydrogenase activity. Retinol dehydrogenase with a clear preference for NADP. Displays high activity towards 9-cis, 11-cis and all-trans-retinol, and to a lesser extent on 13-cis-retinol. Exhibits a low reductive activity towards unsaturated medium-chain aldehydes such as cis -6-nonenal and no activity toward nonanal or 4-hydroxy-nonenal. Has no dehydrogenase activity towards steroid. This is Retinol dehydrogenase 11 (RDH11) from Homo sapiens (Human).